The sequence spans 569 residues: Urease subunit beta (569 aa).

One can recognise a Urease domain in the interval 131-569; that stretch reads GGIDTHIHFI…VSLAQLFSIF (439 aa). Residues His136, His138, and Lys219 each coordinate Ni(2+). The residue at position 219 (Lys219) is an N6-carboxylysine. His221 is a substrate binding site. Residues His248 and His274 each contribute to the Ni(2+) site. His322 functions as the Proton donor in the catalytic mechanism. Asp362 contributes to the Ni(2+) binding site.

Belongs to the metallo-dependent hydrolases superfamily. Urease alpha subunit family. Heterohexamer of 3 UreA (alpha) and 3 UreB (beta) subunits. Four heterohexamers assemble to form a 16 nm dodecameric complex. It depends on Ni cation as a cofactor. Carboxylation allows a single lysine to coordinate two nickel ions.

The protein localises to the cytoplasm. The enzyme catalyses urea + 2 H2O + H(+) = hydrogencarbonate + 2 NH4(+). Its pathway is nitrogen metabolism; urea degradation; CO(2) and NH(3) from urea (urease route): step 1/1. In terms of biological role, ammonia produced by ureolysis increases the gastric pH thereby providing an environment permissive for colonization of the stomach. The protein is Urease subunit beta of Helicobacter pylori (strain J99 / ATCC 700824) (Campylobacter pylori J99).